An 876-amino-acid chain; its full sequence is Phosphoenolpyruvate carboxylase (876 aa).

Active-site residues include H138 and K543.

It belongs to the PEPCase type 1 family. Requires Mg(2+) as cofactor.

The catalysed reaction is oxaloacetate + phosphate = phosphoenolpyruvate + hydrogencarbonate. Forms oxaloacetate, a four-carbon dicarboxylic acid source for the tricarboxylic acid cycle. In Pseudomonas fluorescens (strain ATCC BAA-477 / NRRL B-23932 / Pf-5), this protein is Phosphoenolpyruvate carboxylase.